We begin with the raw amino-acid sequence, 330 residues long: Homeobox protein Hox-C13 (330 aa).

Residues 30 to 47 are compositionally biased toward gly residues; that stretch reads GGGGGGGGGTGGAGGGCS. The segment at 30-50 is disordered; sequence GGGGGGGGGTGGAGGGCSGAS. Residues 260-319 constitute a DNA-binding region (homeobox); the sequence is GRKKRVPYTKVQLKELEKEYAASKFITKEKRRRISATTNLSERQVTIWFQNRRVKEKKVV.

It belongs to the Abd-B homeobox family.

The protein localises to the nucleus. Its function is as follows. Transcription factor which plays a role in hair follicle differentiation. Regulates FOXQ1 expression and that of other hair-specific genes. This chain is Homeobox protein Hox-C13 (HOXC13), found in Homo sapiens (Human).